Here is a 528-residue protein sequence, read N- to C-terminus: Berberine bridge enzyme-like 17 (528 aa).

The first 19 residues, 1–19, serve as a signal peptide directing secretion; it reads MKEVVYVLLLVLLVSVSDA. N-linked (GlcNAc...) asparagine glycosylation is found at N20, N35, N52, and N72. C32 and C94 are disulfide-bonded. The FAD-binding PCMH-type domain maps to 69–246; that stretch reads LNPNDTKLIA…LSWKINLVDV (178 aa). The 6-(S-cysteinyl)-8alpha-(pros-histidyl)-FAD (His-Cys) cross-link spans 109-171; that stretch reads HDYEGLSFTS…KTLAFAGGVC (63 aa). N-linked (GlcNAc...) asparagine glycosylation is found at N256, N340, and N439.

This sequence belongs to the oxygen-dependent FAD-linked oxidoreductase family. The cofactor is FAD. In terms of processing, the FAD cofactor is bound via a bicovalent 6-S-cysteinyl, 8alpha-N1-histidyl FAD linkage.

It is found in the secreted. It localises to the cell wall. This chain is Berberine bridge enzyme-like 17, found in Arabidopsis thaliana (Mouse-ear cress).